A 221-amino-acid chain; its full sequence is Lactate racemization regulatory protein (221 aa).

Positions Asn139–Ser213 constitute an HTH crp-type domain. A DNA-binding region (H-T-H motif) is located at residues Asn172 to Lys192.

As to quaternary structure, multimerizes on DNA. Multimerization is required for transcription activation.

L-lactate acts as a positive effector on the binding and multimerization of LarR on DNA, while D-lactate antagonizes the positive effect of L-lactate. Positive transcriptional regulator that is absolutely required for the expression of lactate racemase (Lar) activity. Controls Lar expression by sensing the L-/D-lactate ration. Binds to a 16-bp palindromic sequence (Lar box motif) that is present in the larR-larA intergenic region, allowing transcription of the larABCDE operon. The chain is Lactate racemization regulatory protein from Lactiplantibacillus plantarum (strain ATCC BAA-793 / NCIMB 8826 / WCFS1) (Lactobacillus plantarum).